We begin with the raw amino-acid sequence, 310 residues long: 2-ketogluconate reductase (310 aa).

NADP(+)-binding positions include 151 to 152 (HI) and 227 to 229 (IAR). Residues R229 and E258 contribute to the active site. H276 (proton donor) is an active-site residue.

The protein belongs to the D-isomer specific 2-hydroxyacid dehydrogenase family. In terms of assembly, homohexamer.

It carries out the reaction D-gluconate + NADP(+) = 2-dehydro-D-gluconate + NADPH + H(+). Its function is as follows. Catalyzes the reduction of 2-keto-D-gluconate to gluconate. Can also catalyze the reduction of 2-keto-L-gulonate. Can use both NADH and NADPH efficiently, with a slight preference for NADPH. This is 2-ketogluconate reductase from Gluconobacter oxydans (strain 621H) (Gluconobacter suboxydans).